The chain runs to 802 residues: Copper-exporting P-type ATPase (802 aa).

2 HMA domains span residues 5–70 (KKTT…YGVA) and 72–138 (ETVE…YDAS). Cu(+)-binding residues include cysteine 16, cysteine 19, cysteine 83, and cysteine 86. 6 consecutive transmembrane segments (helical) span residues 161–181 (LIIS…HLFN), 192–212 (WFQF…FYVG), 224–244 (MDVL…YEMV), 256–276 (LYFE…YLEA), 411–431 (YFVP…ITLV), and 438–458 (PALV…LGLA). Catalysis depends on aspartate 495, which acts as the 4-aspartylphosphate intermediate. Positions 690 and 694 each coordinate Mg(2+). 2 helical membrane-spanning segments follow: residues 748-767 (LFWA…LGLL) and 771-790 (VAGA…ALRL).

The protein belongs to the cation transport ATPase (P-type) (TC 3.A.3) family. Type IB subfamily.

It is found in the cell membrane. It catalyses the reaction Cu(+)(in) + ATP + H2O = Cu(+)(out) + ADP + phosphate + H(+). In terms of biological role, involved in copper export. The polypeptide is Copper-exporting P-type ATPase (copA) (Staphylococcus aureus (strain USA300 / TCH1516)).